A 166-amino-acid polypeptide reads, in one-letter code: MIGLIQRVSQAAVRVDGRVVGEIGPGLLALVCAERGDTVAEADRLLEKLLNYRVFSDAQGKMNLPVRNIDGNGLAGGLLVVSQFTLAADTKSGTRPSFTPAAAPEAGRRLYEHFVARARQQHPIVATGEFGAMMQVSLVNDGPVTFWLQVAPQAVRAGEAETAKSA.

Residues 142 to 143 (GP) carry the Gly-cisPro motif, important for rejection of L-amino acids motif.

This sequence belongs to the DTD family. As to quaternary structure, homodimer.

The protein localises to the cytoplasm. The catalysed reaction is glycyl-tRNA(Ala) + H2O = tRNA(Ala) + glycine + H(+). It catalyses the reaction a D-aminoacyl-tRNA + H2O = a tRNA + a D-alpha-amino acid + H(+). Functionally, an aminoacyl-tRNA editing enzyme that deacylates mischarged D-aminoacyl-tRNAs. Also deacylates mischarged glycyl-tRNA(Ala), protecting cells against glycine mischarging by AlaRS. Acts via tRNA-based rather than protein-based catalysis; rejects L-amino acids rather than detecting D-amino acids in the active site. By recycling D-aminoacyl-tRNA to D-amino acids and free tRNA molecules, this enzyme counteracts the toxicity associated with the formation of D-aminoacyl-tRNA entities in vivo and helps enforce protein L-homochirality. This Ralstonia nicotianae (strain ATCC BAA-1114 / GMI1000) (Ralstonia solanacearum) protein is D-aminoacyl-tRNA deacylase.